A 616-amino-acid polypeptide reads, in one-letter code: Zinc metalloproteinase-disintegrin-like VLAIP-A (616 aa).

Residues 1 to 20 form the signal peptide; the sequence is MMQVLLVTISLAVFPYQGSS. A propeptide spanning residues 21 to 194 is cleaved from the precursor; the sequence is IILESGNVND…KASQLNLTPE (174 aa). The residue at position 195 (Q195) is a Pyrrolidone carboxylic acid. The Peptidase M12B domain maps to 203–399; sequence KYIKLVIVAD…KMPQCILNKP (197 aa). 3 disulfide bridges follow: C314-C394, C354-C378, and C356-C361. H339 is a binding site for Zn(2+). Residue E340 is part of the active site. Zn(2+) contacts are provided by H343 and H349. An N-linked (GlcNAc...) asparagine glycan is attached at N377. The Disintegrin domain occupies 407–493; the sequence is PAVCGNYLVE…ECPTDQFQRN (87 aa). Ca(2+) contacts are provided by V409, N412, L414, E416, E419, and D422. Cystine bridges form between C410–C439, C421–C434, C423–C429, C433–C456, C447–C453, C452–C478, C465–C485, C472–C504, C497–C509, C516–C566, C531–C577, C544–C554, C561–C603, and C597–C609. The D/ECD-tripeptide signature appears at 471-473; sequence ECD.

This sequence belongs to the venom metalloproteinase (M12B) family. P-III subfamily. P-IIIc sub-subfamily. As to quaternary structure, heterodimer; disulfide-linked. It depends on Zn(2+) as a cofactor. In terms of processing, the N-terminus is blocked. In terms of tissue distribution, expressed by the venom gland.

It localises to the secreted. With respect to regulation, inhibited by EDTA or 1,10-phenanthroline. Not inhibited by PMSF. Snake venom zinc metalloprotease that hydrolyzes the alpha-chain (FGA) and more slowly the beta-chain (FGB) of fibrinogen, without affecting the gamma-chain. Cleaves alpha-chain of fibrinogen at '432-Lys-|-Leu-433' and '535-Pro-|-Met-536' bonds. Induces apoptosis in vascular endothelial cells and inhibits endothelial cell adhesion to extracellular matrix proteins such as fibrinogen, fibronectin, vitronectin, collagen I, and collagen IV. Also hydrolyzes azocasein, and insulin B-chain (at the '38-Ala-|-Leu-39' bond). The protein is Zinc metalloproteinase-disintegrin-like VLAIP-A of Macrovipera lebetinus (Levantine viper).